The primary structure comprises 340 residues: Ribosomal RNA small subunit methyltransferase C (340 aa).

Belongs to the methyltransferase superfamily. RsmC family. Monomer.

It is found in the cytoplasm. It catalyses the reaction guanosine(1207) in 16S rRNA + S-adenosyl-L-methionine = N(2)-methylguanosine(1207) in 16S rRNA + S-adenosyl-L-homocysteine + H(+). Its function is as follows. Specifically methylates the guanine in position 1207 of 16S rRNA in the 30S particle. The protein is Ribosomal RNA small subunit methyltransferase C of Vibrio vulnificus (strain CMCP6).